A 105-amino-acid polypeptide reads, in one-letter code: uncharacterized protein (105 aa).

This is an uncharacterized protein from Paracoccus denitrificans.